The primary structure comprises 660 residues: Sodium/nucleoside cotransporter 2 (660 aa).

The residue at position 46 (Ser-46) is a Phosphoserine. 14 helical membrane passes run 82–102, 106–125, 150–168, 174–194, 202–222, 235–255, 262–282, 297–316, 338–357, 364–383, 425–445, 456–476, 531–551, and 569–589; these read ILLG…CILN, ALAL…CHFL, KRVF…LALD, EQLI…ACSK, RTVF…IRTE, IQIF…DTLV, QSLP…YLGL, TMGT…FVGM, VMTG…FISF, LISA…KLVY, VAAN…TLSW, SFQV…GVQW, TTFS…LGGL, and ALFT…ILYV.

The protein belongs to the concentrative nucleoside transporter (CNT) (TC 2.A.41) family.

The protein resides in the membrane. The protein localises to the apicolateral cell membrane. It catalyses the reaction adenosine(out) + Na(+)(out) = adenosine(in) + Na(+)(in). The catalysed reaction is inosine(out) + Na(+)(out) = inosine(in) + Na(+)(in). It carries out the reaction guanosine(out) + Na(+)(out) = guanosine(in) + Na(+)(in). The enzyme catalyses uridine(out) + Na(+)(out) = uridine(in) + Na(+)(in). Sodium-dependent and purine-selective transporter. Exhibits the transport characteristics of the nucleoside transport system cif or N1 subtype (N1/cif) (selective for purine nucleosides and uridine). Plays a critical role in specific uptake and salvage of purine nucleosides in kidney and other tissues. May contribute to regulate the transport of organic compounds in testes across the blood-testis-barrier. This is Sodium/nucleoside cotransporter 2 (Slc28a2) from Mus musculus (Mouse).